The primary structure comprises 289 residues: uncharacterized protein (289 aa).

E48 is a catalytic residue.

The protein belongs to the PhzF family.

This is an uncharacterized protein from Pasteurella multocida (strain Pm70).